Here is a 104-residue protein sequence, read N- to C-terminus: Gastrin (104 aa).

The first 21 residues, 1–21 (MQRLCVCVLILALALTAFSEA), serve as a signal peptide directing secretion. The disordered stretch occupies residues 22 to 49 (SWKPRSQLQDAPSGPGANGGLEPHWLNR). A propeptide spanning residues 22-58 (SWKPRSQLQDAPSGPGANGGLEPHWLNRLGPASHHRW) is cleaved from the precursor. Gln-59 and Gln-76 each carry pyrrolidone carboxylic acid. At Tyr-87 the chain carries Sulfotyrosine. Phenylalanine amide is present on Phe-92. Ser-96 bears the Phosphoserine mark. Positions 96 to 104 (SAEDGDQHP) are excised as a propeptide.

This sequence belongs to the gastrin/cholecystokinin family.

It localises to the secreted. Its function is as follows. Gastrin stimulates the stomach mucosa to produce and secrete hydrochloric acid and the pancreas to secrete its digestive enzymes. It also stimulates smooth muscle contraction and increases blood circulation and water secretion in the stomach and intestine. The chain is Gastrin (GAST) from Felis catus (Cat).